The chain runs to 908 residues: MEEGGRDKAPVQPQQSPAAALGGTDEKPSGKERRDAGDKDKEQELSEEDKQLQDELEMLVERLGEKDTSLYRPALEELRRQIRSSTTSMTSVPKPLKFLRPHYGKLKEIYENMAPGENKRFAADIISVLAMTMSGERECLKYRLVGSQEELASWGHEYVRHLAGEVAKEWQELDDAEKVQREPLLTLVKEIIPYNMAHNAEHEACDLLMEIEQVDMLEKDIDENAYAKVCLYLTSCVNYVPEPENSALLRCALGVFRKFSRFPEALRLALMLNDMELVEDIFTSCKDVVVQKQMAFMLGRHGVFLELSEDVEEYEDLTEIMSNVQLNSNFLALARELDIMEPKVPDDIYKTHLENNRFGGSGSQVDSARMNLASSFVNGFVNAAFGQDKLLTDDGNKWLYKNKDHGMLSAAASLGMILLWDVDGGLTQIDKYLYSSEDYIKSGALLACGIVNSGVRNECDPALALLSDYVLHNSNTMRLGSIFGLGLAYAGSNREDVLTLLLPVMGDSKSSMEVAGVTALACGMIAVGSCNGDVTSTILQTIMEKSETELKDTYARWLPLGLGLNHLGKGEAIEAILAALEVVSEPFRSFANTLVDVCAYAGSGNVLKVQQLLHICSEHFDSKEKEEDKDKKEKKDKDKKEAPADMGAHQGVAVLGIALIAMGEEIGAEMALRTFGHLLRYGEPTLRRAVPLALALISVSNPRLNILDTLSKFSHDADPEVSYNSIFAMGMVGSGTNNARLAAMLRQLAQYHAKDPNNLFMVRLAQGLTHLGKGTLTLCPYHSDRQLMSQVAVAGLLTVLVSFLDVRNIILGKSHYVLYGLVAAMQPRMLVTFDEELRPLPVSVRVGQAVDVVGQAGKPKTITGFQTHTTPVLLAHGERAELATEEFLPVTPILEGFVILRKNPNYDL.

Residue M1 is modified to N-acetylmethionine. The segment at 1-52 (MEEGGRDKAPVQPQQSPAAALGGTDEKPSGKERRDAGDKDKEQELSEEDKQL) is disordered. Residues 10 to 20 (PVQPQQSPAAA) are compositionally biased toward low complexity. A Phosphoserine modification is found at S16. Phosphothreonine is present on T24. The span at 24–52 (TDEKPSGKERRDAGDKDKEQELSEEDKQL) shows a compositional bias: basic and acidic residues. Phosphoserine is present on residues S29 and S147. The residue at position 194 (Y194) is a Phosphotyrosine. S361 and S363 each carry phosphoserine. PC repeat units follow at residues 409–442 (SAAA…YIKS), 443–479 (GALL…TMRL), 480–514 (GSIF…SMEV), 517–551 (VTAL…TELK), and 560–589 (LGLG…PFRS). K551 carries the N6-acetyllysine modification. Over residues 623–643 (KEKEEDKDKKEKKDKDKKEAP) the composition is skewed to basic and acidic residues. The tract at residues 623–645 (KEKEEDKDKKEKKDKDKKEAPAD) is disordered. 2 PC repeats span residues 692-723 (LALA…EVSY) and 742-757 (AAML…KDPN). The required for interaction with UBLCP1 stretch occupies residues 708–903 (DTLSKFSHDA…LEGFVILRKN (196 aa)).

It belongs to the proteasome subunit S2 family. In terms of assembly, component of the 19S proteasome regulatory particle complex. The 26S proteasome consists of a 20S core particle (CP) and two 19S regulatory subunits (RP). The regulatory particle is made of a lid composed of 9 subunits, a base containing 6 ATPases and few additional components including PSMD2. Interacts with RPGRIP1L. Interacts with CRY1 in a KDM8-dependent manner. Interacts (via C-terminus) with phosphatase UBLCP1 (via ubiquitin-like domain); the interaction recruits UBLCP1 to the 19S regulatory particle where it dephosphorylates 19S subunit PSMC2/RPT1 which impairs PSMC2 ATPase activity and disrupts 26S proteasome assembly.

Functionally, component of the 26S proteasome, a multiprotein complex involved in the ATP-dependent degradation of ubiquitinated proteins. This complex plays a key role in the maintenance of protein homeostasis by removing misfolded or damaged proteins, which could impair cellular functions, and by removing proteins whose functions are no longer required. Therefore, the proteasome participates in numerous cellular processes, including cell cycle progression, apoptosis, or DNA damage repair. Binds to the intracellular domain of tumor necrosis factor type 1 receptor. The binding domain of TRAP1 and TRAP2 resides outside the death domain of TNFR1. The chain is 26S proteasome non-ATPase regulatory subunit 2 (PSMD2) from Pongo abelii (Sumatran orangutan).